The following is a 250-amino-acid chain: Small ribosomal subunit protein uS2 (250 aa).

The protein belongs to the universal ribosomal protein uS2 family.

This chain is Small ribosomal subunit protein uS2, found in Albidiferax ferrireducens (strain ATCC BAA-621 / DSM 15236 / T118) (Rhodoferax ferrireducens).